The primary structure comprises 904 residues: Dynamin-like protein C (904 aa).

Residues 44–102 adopt a coiled-coil conformation; sequence IAEAMALKMHEEEKKKREEKKRKRDNEELLSKQVRTKLENERKKLDDSESINASTNQEL. The tract at residues 53-93 is disordered; it reads HEEEKKKREEKKRKRDNEELLSKQVRTKLENERKKLDDSES. Residues 67–90 are compositionally biased toward basic and acidic residues; sequence RDNEELLSKQVRTKLENERKKLDD. The Dynamin-type G domain maps to 119-441; the sequence is SFDTPELVVV…HEKYQQNLLP (323 aa). Positions 129-136 are G1 motif; the sequence is GMQSDGKS. 129-136 serves as a coordination point for GTP; sequence GMQSDGKS. Residues 155 to 157 form a G2 motif region; that stretch reads GTR. A disordered region spans residues 169–227; it reads SKQQPSCRFKKEDYSNSYGGSSSSTSTTSGNSNHNTDKQQNVSSSQGGGGGSNNLNEDK. The segment covering 183-213 has biased composition (low complexity); the sequence is SNSYGGSSSSTSTTSGNSNHNTDKQQNVSSS. Residues 278 to 281 form a G3 motif region; the sequence is DTPG. GTP contacts are provided by residues 278–282 and 343–346; these read DTPGF and TKFD. The interval 343–346 is G4 motif; sequence TKFD. The tract at residues 378-381 is G5 motif; that stretch reads LPLK. Residues 781 to 811 adopt a coiled-coil conformation; the sequence is EMFQLGLKELENKLHKLEFQLIDCKKNRDKF. Disordered stretches follow at residues 821 to 840 and 853 to 904; these read SLNQ…ASSS and NGKF…FDQN. Over residues 853 to 876 the composition is skewed to polar residues; the sequence is NGKFSTPDKNSLTMSPFTSPFTQS. Residues 877–891 are compositionally biased toward low complexity; sequence NYHQHNNNNYQINQQ.

This sequence belongs to the TRAFAC class dynamin-like GTPase superfamily. Dynamin/Fzo/YdjA family.

Its subcellular location is the cytoplasm. It catalyses the reaction GTP + H2O = GDP + phosphate + H(+). Involved in cytokinesis. May hydrolyze GTP. The chain is Dynamin-like protein C (dlpC) from Dictyostelium discoideum (Social amoeba).